The chain runs to 427 residues: Serine hydroxymethyltransferase (427 aa).

(6S)-5,6,7,8-tetrahydrofolate is bound by residues leucine 124 and 128 to 130 (GHL). The residue at position 233 (lysine 233) is an N6-(pyridoxal phosphate)lysine.

The protein belongs to the SHMT family. In terms of assembly, homodimer. Requires pyridoxal 5'-phosphate as cofactor.

It is found in the cytoplasm. The enzyme catalyses (6R)-5,10-methylene-5,6,7,8-tetrahydrofolate + glycine + H2O = (6S)-5,6,7,8-tetrahydrofolate + L-serine. It participates in one-carbon metabolism; tetrahydrofolate interconversion. It functions in the pathway amino-acid biosynthesis; glycine biosynthesis; glycine from L-serine: step 1/1. Functionally, catalyzes the reversible interconversion of serine and glycine with tetrahydrofolate (THF) serving as the one-carbon carrier. This reaction serves as the major source of one-carbon groups required for the biosynthesis of purines, thymidylate, methionine, and other important biomolecules. Also exhibits THF-independent aldolase activity toward beta-hydroxyamino acids, producing glycine and aldehydes, via a retro-aldol mechanism. This chain is Serine hydroxymethyltransferase, found in Paracoccus denitrificans (strain Pd 1222).